The chain runs to 87 residues: Small ribosomal subunit protein uS17 (87 aa).

The protein belongs to the universal ribosomal protein uS17 family. Part of the 30S ribosomal subunit.

One of the primary rRNA binding proteins, it binds specifically to the 5'-end of 16S ribosomal RNA. This is Small ribosomal subunit protein uS17 from Staphylococcus aureus (strain Mu3 / ATCC 700698).